The chain runs to 1046 residues: Probable inorganic carbon transporter subunit DabA1 (1046 aa).

The Zn(2+) site is built by cysteine 462, aspartate 464, histidine 721, and cysteine 736.

This sequence belongs to the inorganic carbon transporter (TC 9.A.2) DabA family. Forms a complex with DabB1. It depends on Zn(2+) as a cofactor.

It is found in the cell inner membrane. Functionally, part of an energy-coupled inorganic carbon pump. The sequence is that of Probable inorganic carbon transporter subunit DabA1 from Halothiobacillus neapolitanus (strain ATCC 23641 / c2) (Thiobacillus neapolitanus).